Here is a 475-residue protein sequence, read N- to C-terminus: MSPKTETKASVGFQAGVKDYRLTYYTPEYQTKDTDILAAFRVTPQPGVPPEEAGAAVAAESSTGTWTTVWTDGLTSLDRYKGRCYDLEPVPGEDNQYIAYVAYPLDLFEEGSVTNMFTSIVGNVFGFKALRALRLEDLRIPTSYIKTFQGPPHGIQVERDKLNKYGRPLLGCTIKPKLGLSAKNYGRAVYECLRGGLDFTKDDENVNSQPFMRWRDRFVFCAEAIYKAQAETGEIKGHYLNATAGTCEEMIKRAVFARELGVPIVMHDYLTGGFTANTTLAHYCRDNGLLLHIHRAMHAVIDRQKNHGMHFRVLAKALRMSGGDHIHAGTVVGKLEGEREITLGFVDLLRDDFIEKDRSRGIYFTQDWVSMPGVMPVASGGIHVWHMPALTDIFGDDAVLQFGGGTLGHPWGNAPGAVANRVALEACVQARNEGRDLAREGNEVIREAAKWSPELAAACEVWKEIKFEFESVDTL.

The propeptide occupies 1–2 (MS). The residue at position 3 (Pro3) is an N-acetylproline. The substrate site is built by Asn123 and Thr173. Lys175 acts as the Proton acceptor in catalysis. Lys177 contributes to the substrate binding site. Mg(2+)-binding residues include Lys201, Asp203, and Glu204. Position 201 is an N6-carboxylysine (Lys201). Catalysis depends on His294, which acts as the Proton acceptor. Arg295, His327, and Ser379 together coordinate substrate.

Belongs to the RuBisCO large chain family. Type I subfamily. Heterohexadecamer of 8 large chains and 8 small chains; disulfide-linked. The disulfide link is formed within the large subunit homodimers. Mg(2+) serves as cofactor. Post-translationally, the disulfide bond which can form in the large chain dimeric partners within the hexadecamer appears to be associated with oxidative stress and protein turnover.

It is found in the plastid. Its subcellular location is the chloroplast. It catalyses the reaction 2 (2R)-3-phosphoglycerate + 2 H(+) = D-ribulose 1,5-bisphosphate + CO2 + H2O. It carries out the reaction D-ribulose 1,5-bisphosphate + O2 = 2-phosphoglycolate + (2R)-3-phosphoglycerate + 2 H(+). Functionally, ruBisCO catalyzes two reactions: the carboxylation of D-ribulose 1,5-bisphosphate, the primary event in carbon dioxide fixation, as well as the oxidative fragmentation of the pentose substrate in the photorespiration process. Both reactions occur simultaneously and in competition at the same active site. The chain is Ribulose bisphosphate carboxylase large chain from Welwitschia mirabilis (Tree tumbo).